The sequence spans 417 residues: NADH-quinone oxidoreductase subunit D (417 aa).

It belongs to the complex I 49 kDa subunit family. NDH-1 is composed of 14 different subunits. Subunits NuoB, C, D, E, F, and G constitute the peripheral sector of the complex.

The protein resides in the cell inner membrane. It catalyses the reaction a quinone + NADH + 5 H(+)(in) = a quinol + NAD(+) + 4 H(+)(out). Functionally, NDH-1 shuttles electrons from NADH, via FMN and iron-sulfur (Fe-S) centers, to quinones in the respiratory chain. The immediate electron acceptor for the enzyme in this species is believed to be ubiquinone. Couples the redox reaction to proton translocation (for every two electrons transferred, four hydrogen ions are translocated across the cytoplasmic membrane), and thus conserves the redox energy in a proton gradient. In Cupriavidus metallidurans (strain ATCC 43123 / DSM 2839 / NBRC 102507 / CH34) (Ralstonia metallidurans), this protein is NADH-quinone oxidoreductase subunit D.